We begin with the raw amino-acid sequence, 1241 residues long: Phosphorylase b kinase regulatory subunit alpha, skeletal muscle isoform (1241 aa).

9 positions are modified to phosphoserine: Ser-629, Ser-730, Ser-736, Ser-739, Ser-759, Ser-812, Ser-973, Ser-982, and Ser-986. The tract at residues Leu-811–Leu-841 is calmodulin-binding. Ser-1008 carries the post-translational modification Phosphoserine; by autocatalysis. Phosphoserine; by PKA is present on Ser-1019. Ser-1021 and Ser-1024 each carry phosphoserine. The tract at residues Ser-1064–Ser-1104 is calmodulin-binding. Residue Ser-1131 is modified to Phosphoserine. Cys-1238 carries the S-farnesyl cysteine lipid modification.

It belongs to the phosphorylase b kinase regulatory chain family. In terms of assembly, hexadecamer of 4 heterotetramers, each composed of alpha, beta, gamma, and delta subunits. Alpha (PHKA1 or PHKA2) and beta (PHKB) are regulatory subunits, gamma (PHKG1 or PHKG2) is the catalytic subunit, and delta is calmodulin. In terms of processing, although the final Cys may be farnesylated, the terminal tripeptide is probably not removed, and the C-terminus is not methylated. In terms of tissue distribution, both isoforms are expressed in muscle.

It is found in the cell membrane. Its pathway is glycan biosynthesis; glycogen metabolism. By phosphorylation of various serine residues and by calcium. Its function is as follows. Phosphorylase b kinase catalyzes the phosphorylation of serine in certain substrates, including troponin I. The alpha chain may bind calmodulin. The polypeptide is Phosphorylase b kinase regulatory subunit alpha, skeletal muscle isoform (Phka1) (Mus musculus (Mouse)).